The following is a 111-amino-acid chain: MSDTAVDASVEKTTKDLKAKEKEVVEEAENGKDKPTNGKAENEENGEPEVDNEGDEEDEVDEEDEEDEVEGEDDDDDDEVEGVTGKRAAEDDEDDDDDDVEIKKQKTDEDD.

Residues 1–111 form a disordered region; sequence MSDTAVDASV…IKKQKTDEDD (111 aa). Residues 9 to 42 show a composition bias toward basic and acidic residues; the sequence is SVEKTTKDLKAKEKEVVEEAENGKDKPTNGKAEN. Acidic residues-rich tracts occupy residues 43–81 and 90–100; these read EENG…DEVE and EDDEDDDDDDV. Positions 101–111 are enriched in basic and acidic residues; that stretch reads EIKKQKTDEDD.

This sequence belongs to the pro/parathymosin family.

It is found in the nucleus. This chain is Prothymosin alpha-A (ptma-a), found in Xenopus laevis (African clawed frog).